The chain runs to 952 residues: Lysosomal alpha-glucosidase (952 aa).

The first 27 residues, 1-27, serve as a signal peptide directing secretion; it reads MGVRHPPCSHRLLAVCALVSLATAALL. Residues 28–69 constitute a propeptide that is removed on maturation; that stretch reads GHILLHDFLLVPRELSGSSPVLEETHPAHQQGASRPGPRDAQ. Residues 47 to 82 are disordered; sequence PVLEETHPAHQQGASRPGPRDAQAHPGRPRAVPTQC. The region spanning 80–131 is the P-type domain; sequence TQCDVPPNSRFDCAPDKAITQEQCEARGCCYIPAKQGLQGAQMGQPWCFFPP. 3 disulfides stabilise this stretch: Cys82–Cys109, Cys92–Cys108, and Cys103–Cys127. N-linked (GlcNAc...) asparagine glycans are attached at residues Asn140, Asn233, and Asn390. Asp404 contributes to the substrate binding site. Asn470 is a glycosylation site (N-linked (GlcNAc...) asparagine). Asp518 serves as the catalytic Nucleophile. Glu521 is an active-site residue. A disulfide bond links Cys533 and Cys558. Arg600 and Asp616 together coordinate substrate. Cys647 and Cys658 are joined by a disulfide. Asn652 carries an N-linked (GlcNAc...) asparagine glycan. His674 provides a ligand contact to substrate. 2 N-linked (GlcNAc...) asparagine glycosylation sites follow: Asn882 and Asn925.

The protein belongs to the glycosyl hydrolase 31 family. Post-translationally, the different forms of acid glucosidase are obtained by proteolytic processing. In terms of processing, phosphorylation of mannose residues ensures efficient transport of the enzyme to the lysosomes via the mannose 6-phosphate receptor.

The protein resides in the lysosome. Its subcellular location is the lysosome membrane. It catalyses the reaction Hydrolysis of terminal, non-reducing (1-&gt;4)-linked alpha-D-glucose residues with release of alpha-D-glucose.. Essential for the degradation of glycogen in lysosomes. Has highest activity on alpha-1,4-linked glycosidic linkages, but can also hydrolyze alpha-1,6-linked glucans. The polypeptide is Lysosomal alpha-glucosidase (GAA) (Homo sapiens (Human)).